A 333-amino-acid polypeptide reads, in one-letter code: Large ribosomal subunit protein uL3 (333 aa).

Basic residues-rich tracts occupy residues 1-10 (MGMKRNRPRR) and 17-26 (PRKRAKRPVP). Residues 1–29 (MGMKRNRPRRGSLAFSPRKRAKRPVPKIR) are disordered.

The protein belongs to the universal ribosomal protein uL3 family. Part of the 50S ribosomal subunit. Forms a cluster with proteins L14 and L24e.

One of the primary rRNA binding proteins, it binds directly near the 3'-end of the 23S rRNA, where it nucleates assembly of the 50S subunit. This chain is Large ribosomal subunit protein uL3, found in Methanococcus aeolicus (strain ATCC BAA-1280 / DSM 17508 / OCM 812 / Nankai-3).